The chain runs to 268 residues: Stomatin homolog PYRAB06580 (268 aa).

The chain crosses the membrane as a helical span at residues 1-21 (MILPTNFFVTTIILLFILIFL). Coiled-coil stretches lie at residues 125–152 (GQAH…EATD) and 178–213 (KQAE…ISEH).

The protein belongs to the band 7/mec-2 family. In terms of assembly, homotrimer.

The protein resides in the membrane. The sequence is that of Stomatin homolog PYRAB06580 from Pyrococcus abyssi (strain GE5 / Orsay).